Reading from the N-terminus, the 178-residue chain is ATP synthase subunit delta (178 aa).

This sequence belongs to the ATPase delta chain family. As to quaternary structure, F-type ATPases have 2 components, F(1) - the catalytic core - and F(0) - the membrane proton channel. F(1) has five subunits: alpha(3), beta(3), gamma(1), delta(1), epsilon(1). F(0) has three main subunits: a(1), b(2) and c(10-14). The alpha and beta chains form an alternating ring which encloses part of the gamma chain. F(1) is attached to F(0) by a central stalk formed by the gamma and epsilon chains, while a peripheral stalk is formed by the delta and b chains.

Its subcellular location is the cell inner membrane. Functionally, f(1)F(0) ATP synthase produces ATP from ADP in the presence of a proton or sodium gradient. F-type ATPases consist of two structural domains, F(1) containing the extramembraneous catalytic core and F(0) containing the membrane proton channel, linked together by a central stalk and a peripheral stalk. During catalysis, ATP synthesis in the catalytic domain of F(1) is coupled via a rotary mechanism of the central stalk subunits to proton translocation. This protein is part of the stalk that links CF(0) to CF(1). It either transmits conformational changes from CF(0) to CF(1) or is implicated in proton conduction. The sequence is that of ATP synthase subunit delta from Stutzerimonas stutzeri (strain A1501) (Pseudomonas stutzeri).